The primary structure comprises 354 residues: Chorismate synthase (354 aa).

NADP(+) is bound at residue R46. FMN contacts are provided by residues 123 to 125, 233 to 234, G273, 288 to 292, and R314; these read RVS, NG, and KPTPS.

It belongs to the chorismate synthase family. Homotetramer. Requires FMNH2 as cofactor.

It carries out the reaction 5-O-(1-carboxyvinyl)-3-phosphoshikimate = chorismate + phosphate. The protein operates within metabolic intermediate biosynthesis; chorismate biosynthesis; chorismate from D-erythrose 4-phosphate and phosphoenolpyruvate: step 7/7. In terms of biological role, catalyzes the anti-1,4-elimination of the C-3 phosphate and the C-6 proR hydrogen from 5-enolpyruvylshikimate-3-phosphate (EPSP) to yield chorismate, which is the branch point compound that serves as the starting substrate for the three terminal pathways of aromatic amino acid biosynthesis. This reaction introduces a second double bond into the aromatic ring system. The protein is Chorismate synthase of Campylobacter curvus (strain 525.92).